Here is a 271-residue protein sequence, read N- to C-terminus: MSSIAKSARIHKLAVVEDGAVIGENVVVGPFCHVGPKVVLHDSVQLLTHVVVTGRTTIGKGTKIFPMAVVGGDPQSVHHGGEETTLDIGENCTIREGVTINTGTADYGGKTVVGNNNLFLANSHVAHDCRVGNNVIMSNNVMLAGHVTVEDRAILGGGCAVHQFTRIGRQAFVGGLSAASYDVIPYGMLNGNPGVLSGLNIVGMTRAGIERSVIHRVRRAYKSIFEGEGSIRDNATAIREEYADCKEAMEILDFIAADSDRALSSPNRGKG.

The protein belongs to the transferase hexapeptide repeat family. LpxA subfamily. Homotrimer.

The protein localises to the cytoplasm. It carries out the reaction a (3R)-hydroxyacyl-[ACP] + UDP-N-acetyl-alpha-D-glucosamine = a UDP-3-O-[(3R)-3-hydroxyacyl]-N-acetyl-alpha-D-glucosamine + holo-[ACP]. Its pathway is glycolipid biosynthesis; lipid IV(A) biosynthesis; lipid IV(A) from (3R)-3-hydroxytetradecanoyl-[acyl-carrier-protein] and UDP-N-acetyl-alpha-D-glucosamine: step 1/6. Its function is as follows. Involved in the biosynthesis of lipid A, a phosphorylated glycolipid that anchors the lipopolysaccharide to the outer membrane of the cell. The polypeptide is Acyl-[acyl-carrier-protein]--UDP-N-acetylglucosamine O-acyltransferase (Rhizobium rhizogenes (strain K84 / ATCC BAA-868) (Agrobacterium radiobacter)).